Here is a 758-residue protein sequence, read N- to C-terminus: Aspartyl/asparaginyl beta-hydroxylase (758 aa).

Positions 1-46 (MAQRKNAKSSGNSSSSGSGSGSTSAGSSSPGARRETKHGGHKNGRK) are disordered. At 1–53 (MAQRKNAKSSGNSSSSGSGSGSTSAGSSSPGARRETKHGGHKNGRKGGLSGTS) the chain is on the cytoplasmic side. The span at 9 to 31 (SSGNSSSSGSGSGSTSAGSSSPG) shows a compositional bias: low complexity. The residue at position 14 (Ser-14) is a Phosphoserine. A helical; Signal-anchor for type II membrane protein transmembrane segment spans residues 54-74 (FFTWFMVIALLGVWTSVAVVW). Leu-64 carries N-linked (GlcNAc...) asparagine glycosylation. Topologically, residues 75–758 (FDLVDYEEVL…PQQRRSLPAI (684 aa)) are lumenal. 5 residues coordinate Ca(2+): Asp-91, Asp-93, Asp-95, Asp-97, and Asp-102. Disordered regions lie at residues 111 to 140 (ERSTSEPAVPPEEAEPHTEPEEQVPVEAEP) and 304 to 324 (EEQQEVPPETNRKTDDPEQKA). Positions 313–324 (TNRKTDDPEQKA) are enriched in basic and acidic residues. One copy of the TPR 1 repeat lies at 341–374 (IKAELDAAEKLRKRGKIEEAVNAFKELVRKYPQS). The N-linked (GlcNAc...) asparagine glycan is linked to Asn-452. TPR repeat units lie at residues 454–487 (TSLKNDLGVGYLLIGDNDNAKKVYEEVLSVTPND), 489–521 (FAKVHYGFILKAQNKIAESIPYLKEGIESGDPG), and 525–557 (GRFYFHLGDAMQRVGNKEAYKWYELGHKRGHFA). A 2-oxoglutarate-binding site is contributed by Trp-625. A disulfide bridge connects residues Cys-641 and Cys-648. Ser-668 serves as a coordination point for 2-oxoglutarate. Fe cation is bound at residue His-679. 2-oxoglutarate is bound at residue 688–690 (RMH). The N-linked (GlcNAc...) asparagine glycan is linked to Asn-706. His-725 is a Fe cation binding site. Arg-735 lines the 2-oxoglutarate pocket.

This sequence belongs to the aspartyl/asparaginyl beta-hydroxylase family. In terms of assembly, monomer. Isoform 8 interacts with ORAI1 and STIM1. Isoform 4 interacts with CASQ2. Fe cation serves as cofactor. Isoform 1 is detected in all tissues tested. Isoform 8 is mainly expressed in pancreas, heart, brain, kidney and liver. Isoform 8 is expressed in kidney (at protein level).

The protein localises to the endoplasmic reticulum membrane. Its subcellular location is the sarcoplasmic reticulum membrane. It carries out the reaction L-aspartyl-[protein] + 2-oxoglutarate + O2 = 3-hydroxy-L-aspartyl-[protein] + succinate + CO2. Specifically hydroxylates an Asp or Asn residue in certain epidermal growth factor-like (EGF) domains of a number of proteins. Its function is as follows. Membrane-bound Ca(2+)-sensing protein, which is a structural component of the ER-plasma membrane junctions. Isoform 8 regulates the activity of Ca(+2) released-activated Ca(+2) (CRAC) channels in T-cells. This is Aspartyl/asparaginyl beta-hydroxylase (ASPH) from Homo sapiens (Human).